The chain runs to 222 residues: MLWALFFLVTTIHAELCRPDAENAFKVRLSIKAALGDKAYVWDTDEEYLFRAMVAFSMRKVPNREGTEISHVLLCNVTQRVSFWFVVTDPLKNHTLPAAEVQSAIRMNRNRINSAFFLDDHTLEFLKIPSTLAPPMDPSVPVWIIVFGVIFCIVTVAIALLVLSGIRQRRRNKKGPPGVEDAEDKCENIITIENGIPCDPLDMKGGHINDGFLTEDERLTPL.

The signal sequence occupies residues 1-14 (MLWALFFLVTTIHA). Residues 15 to 141 (ELCRPDAENA…LAPPMDPSVP (127 aa)) are Extracellular-facing. In terms of domain architecture, Collectrin-like spans 21–222 (AENAFKVRLS…LTEDERLTPL (202 aa)). Residues Asn-76 and Asn-93 are each glycosylated (N-linked (GlcNAc...) asparagine). Residues 142–162 (VWIIVFGVIFCIVTVAIALLV) traverse the membrane as a helical segment. Topologically, residues 163-222 (LSGIRQRRRNKKGPPGVEDAEDKCENIITIENGIPCDPLDMKGGHINDGFLTEDERLTPL) are cytoplasmic. Residues Thr-214 and Thr-220 each carry the phosphothreonine modification.

Belongs to the CLTRN family. Monomer. Homodimer; dimerization prevents CLTRN cleavage by BACE2. Interacts with SLC6A18; this interaction regulates the trafficking of SLC6A18 to the cell membrane and its amino acid transporter activity. Interacts with SLC6A19; this interaction regulates the trafficking of SLC6A19 to the cell membrane and its amino acid transporter activity. Interacts with SNAPIN. In terms of processing, glycosylated. Glycosylation is required for plasma membrane localization and for its cleavage by BACE2. Proteolytically processed in pancreatic beta cells by BACE2 leading to the generation and extracellular release of soluble CLTRN, and a corresponding cell-associated C-terminal fragment which is later cleaved by gamma-secretase. This shedding process inactivates CLTRN. Three cleavage sites have been identified for BACE2, two clustered sites after Phe-116 and Leu-118 and a more membrane proximal site at Phe-125; the preferred BACE2 cleavage site seems to be between Phe-125 and Leu-126, Phe-116 and Leu-118 act as alternative sites. In terms of tissue distribution, kidney; collecting ducts. Pancreas; beta cells of islets.

The protein resides in the cell membrane. Functionally, plays an important role in amino acid transport by acting as binding partner of amino acid transporters SLC6A18 and SLC6A19, regulating their trafficking on the cell surface and their activity. May also play a role in trafficking of amino acid transporters SLC3A1 and SLC7A9 to the renal cortical cell membrane. Regulator of SNARE complex function. Stimulator of beta cell replication. This chain is Collectrin, found in Rattus norvegicus (Rat).